We begin with the raw amino-acid sequence, 351 residues long: Photosystem II D2 protein (351 aa).

A helical membrane pass occupies residues Thr-39–Thr-59. Residue His-116 participates in chlorophyll a binding. The helical transmembrane segment at Gly-123 to Pro-139 threads the bilayer. Residues Gln-128 and Asn-141 each coordinate pheophytin a. The helical transmembrane segment at Val-151 to Ser-164 threads the bilayer. Residue His-196 coordinates chlorophyll a. The helical transmembrane segment at Gly-206 to Glu-226 threads the bilayer. Residues His-213 and Phe-260 each coordinate a plastoquinone. Residue His-213 participates in Fe cation binding. A Fe cation-binding site is contributed by His-267. The helical transmembrane segment at Gly-277 to Arg-293 threads the bilayer.

This sequence belongs to the reaction center PufL/M/PsbA/D family. In terms of assembly, PSII is composed of 1 copy each of membrane proteins PsbA, PsbB, PsbC, PsbD, PsbE, PsbF, PsbH, PsbI, PsbJ, PsbK, PsbL, PsbM, PsbT, PsbX, PsbY, PsbZ, Psb30/Ycf12, peripheral proteins PsbO, CyanoQ (PsbQ), PsbU, PsbV and a large number of cofactors. It forms dimeric complexes. The cofactor is The D1/D2 heterodimer binds P680, chlorophylls that are the primary electron donor of PSII, and subsequent electron acceptors. It shares a non-heme iron and each subunit binds pheophytin, quinone, additional chlorophylls, carotenoids and lipids. There is also a Cl(-1) ion associated with D1 and D2, which is required for oxygen evolution. The PSII complex binds additional chlorophylls, carotenoids and specific lipids..

The protein resides in the host cellular thylakoid membrane. It catalyses the reaction 2 a plastoquinone + 4 hnu + 2 H2O = 2 a plastoquinol + O2. In terms of biological role, photosystem II (PSII) is a light-driven water:plastoquinone oxidoreductase that uses light energy to abstract electrons from H(2)O, generating O(2) and a proton gradient subsequently used for ATP formation. It consists of a core antenna complex that captures photons, and an electron transfer chain that converts photonic excitation into a charge separation. The D1/D2 (PsbA/PsbD) reaction center heterodimer binds P680, the primary electron donor of PSII as well as several subsequent electron acceptors. D2 is needed for assembly of a stable PSII complex. The protein is Photosystem II D2 protein (psbD) of Synechococcus.